The following is an 89-amino-acid chain: Small ribosomal subunit protein uS15 (89 aa).

Belongs to the universal ribosomal protein uS15 family. Part of the 30S ribosomal subunit. Forms a bridge to the 50S subunit in the 70S ribosome, contacting the 23S rRNA.

One of the primary rRNA binding proteins, it binds directly to 16S rRNA where it helps nucleate assembly of the platform of the 30S subunit by binding and bridging several RNA helices of the 16S rRNA. Its function is as follows. Forms an intersubunit bridge (bridge B4) with the 23S rRNA of the 50S subunit in the ribosome. This is Small ribosomal subunit protein uS15 from Chromohalobacter salexigens (strain ATCC BAA-138 / DSM 3043 / CIP 106854 / NCIMB 13768 / 1H11).